The chain runs to 43 residues: DeltaKappa-actitoxin-Avd4b (43 aa).

Intrachain disulfides connect Cys-4–Cys-39, Cys-6–Cys-32, and Cys-22–Cys-40.

The protein belongs to the sea anemone type 3 (BDS) potassium channel toxin family.

The protein localises to the secreted. It localises to the nematocyst. Acts as a gating modifier on both Kv and Nav ion channels. Voltage-dependently inhibits voltage-gated potassium channels Kv3 (Kv3.1/KCNC1, Kv3.2/KCNC2 and Kv3.4/KCNC4). Slows inactivation of the voltage-gated sodium channel Nav1.7/SCN9A. Inhibits all Kv3.1, Kv3.2 and Kv3.4 by about 50% when tested at a voltage of +40 mV. May act by binding residues in voltage-sensing domains S3b and S4 of Kv3. Tests have been done on human Nav1.7/SCN9A and rat SCG neurons that mostly carry Nav1.7 channels (EC(50)=300 nM). This toxin also reduces blood pressure. The protein is DeltaKappa-actitoxin-Avd4b of Anemonia sulcata (Mediterranean snakelocks sea anemone).